The following is a 378-amino-acid chain: UPF0284 protein MK0224 (378 aa).

The protein belongs to the UPF0284 family.

The polypeptide is UPF0284 protein MK0224 (Methanopyrus kandleri (strain AV19 / DSM 6324 / JCM 9639 / NBRC 100938)).